The following is an 834-amino-acid chain: Periplasmic nitrate reductase (834 aa).

A signal peptide (tat-type signal) is located at residues 1–29; sequence MNLTRREFAKANAAAIAAAAAGLPILVRA. One can recognise a 4Fe-4S Mo/W bis-MGD-type domain in the interval 41 to 97; that stretch reads LVWNKAPCRFCGTGCSVMVATRDGQVVATHGDIKAEVNRGINCVKGYFLSKIMYGSD. [4Fe-4S] cluster-binding residues include C48, C51, C55, and C83. Mo-bis(molybdopterin guanine dinucleotide) contacts are provided by residues K85, Q152, N177, C181, 214 to 221, 245 to 249, 264 to 266, M375, Q379, N485, 511 to 512, K534, D561, and 721 to 730; these read WGSNMAEM, STFEH, QTD, SD, and TGRVLEHWHT. F797 provides a ligand contact to substrate. N805 and K822 together coordinate Mo-bis(molybdopterin guanine dinucleotide).

Belongs to the prokaryotic molybdopterin-containing oxidoreductase family. NasA/NapA/NarB subfamily. Component of the periplasmic nitrate reductase NapAB complex composed of NapA and NapB. It depends on [4Fe-4S] cluster as a cofactor. Requires Mo-bis(molybdopterin guanine dinucleotide) as cofactor. Predicted to be exported by the Tat system. The position of the signal peptide cleavage has not been experimentally proven.

The protein resides in the periplasm. It carries out the reaction 2 Fe(II)-[cytochrome] + nitrate + 2 H(+) = 2 Fe(III)-[cytochrome] + nitrite + H2O. Functionally, catalytic subunit of the periplasmic nitrate reductase complex NapAB. Receives electrons from NapB and catalyzes the reduction of nitrate to nitrite. This chain is Periplasmic nitrate reductase, found in Pseudomonas aeruginosa (strain LESB58).